The primary structure comprises 294 residues: MYB-like transcription factor ODO1 (294 aa).

HTH myb-type domains lie at 9–61 (KLGV…TNYL) and 62–116 (RPDL…KKKL). 2 consecutive DNA-binding regions (H-T-H motif) follow at residues 37–61 (WRAVPKLAGLKRCGKSCRLRWTNYL) and 89–112 (WSKIAARLPGRTDNEIKNHWNTHI). Disordered stretches follow at residues 128 to 152 (PLKKEANLSDQPTTESDQNKENGHQ) and 171 to 191 (TEFDNNSSFSSSASSSENSSC).

In terms of tissue distribution, restricted to the petals, with the highest expression in the limb, probably in both epidermal and mesophyll cell layers.

It localises to the nucleus. In terms of biological role, R2R3 MYB-type transcription factor controlling the production of volatile organic compounds (VOCs), including floral volatile benzenoids and phenylpropanoids (FVBP), in flowers of fragrant cultivars (e.g. cv. Mitchell and cv. V26) by regulating the shikimate pathway, via the activation of several genes (e.g. EPSPS, ADT1, PAL1, CFAT and CCoAOMT1). This scent, mostly produced in the evening and night by the petals, attracts the pollinators (e.g. the night-active hawkmoth pollinator Manduca sexta). Promotes the expression of ABCG1 in petals three hours before the onset of volatile scent emission. Anthocyanins production is not controlled by ODO1 as color and scent are produced at different stages of development. Seems to trigger a negative feed-back loop that represses the expression of EOBI. The protein is MYB-like transcription factor ODO1 of Petunia hybrida (Petunia).